Consider the following 44-residue polypeptide: Cytochrome b559 subunit beta (44 aa).

A helical transmembrane segment spans residues W19–A35. Residue H23 participates in heme binding.

Belongs to the PsbE/PsbF family. Heterodimer of an alpha subunit and a beta subunit. PSII is composed of 1 copy each of membrane proteins PsbA, PsbB, PsbC, PsbD, PsbE, PsbF, PsbH, PsbI, PsbJ, PsbK, PsbL, PsbM, PsbT, PsbX, PsbY, PsbZ, Psb30/Ycf12, peripheral proteins PsbO, CyanoQ (PsbQ), PsbU, PsbV and a large number of cofactors. It forms dimeric complexes. Heme b serves as cofactor.

Its subcellular location is the cellular thylakoid membrane. This b-type cytochrome is tightly associated with the reaction center of photosystem II (PSII). PSII is a light-driven water:plastoquinone oxidoreductase that uses light energy to abstract electrons from H(2)O, generating O(2) and a proton gradient subsequently used for ATP formation. It consists of a core antenna complex that captures photons, and an electron transfer chain that converts photonic excitation into a charge separation. The chain is Cytochrome b559 subunit beta from Rippkaea orientalis (strain PCC 8801 / RF-1) (Cyanothece sp. (strain PCC 8801)).